The chain runs to 145 residues: D-aminoacyl-tRNA deacylase (145 aa).

Residues 137–138 (GP) carry the Gly-cisPro motif, important for rejection of L-amino acids motif.

The protein belongs to the DTD family. Homodimer.

The protein localises to the cytoplasm. The enzyme catalyses glycyl-tRNA(Ala) + H2O = tRNA(Ala) + glycine + H(+). The catalysed reaction is a D-aminoacyl-tRNA + H2O = a tRNA + a D-alpha-amino acid + H(+). An aminoacyl-tRNA editing enzyme that deacylates mischarged D-aminoacyl-tRNAs. Also deacylates mischarged glycyl-tRNA(Ala), protecting cells against glycine mischarging by AlaRS. Acts via tRNA-based rather than protein-based catalysis; rejects L-amino acids rather than detecting D-amino acids in the active site. By recycling D-aminoacyl-tRNA to D-amino acids and free tRNA molecules, this enzyme counteracts the toxicity associated with the formation of D-aminoacyl-tRNA entities in vivo and helps enforce protein L-homochirality. The protein is D-aminoacyl-tRNA deacylase of Saccharophagus degradans (strain 2-40 / ATCC 43961 / DSM 17024).